The following is a 269-amino-acid chain: Exodeoxyribonuclease WalJ (269 aa).

Positions 61, 63, 65, 66, and 150 each coordinate a divalent metal cation.

The protein belongs to the metallo-beta-lactamase superfamily. Requires Fe(2+) as cofactor. It depends on Zn(2+) as a cofactor. The cofactor is Mn(2+).

The protein resides in the cell membrane. In terms of biological role, 5'-&gt;3' double-stranded DNA exonuclease. May be involved in the WalK/WalR signal transduction pathway. Required for accurate coordination of cell division with DNA replication. May play a role in cell wall metabolism. This chain is Exodeoxyribonuclease WalJ, found in Streptococcus pneumoniae serotype 2 (strain D39 / NCTC 7466).